The sequence spans 297 residues: D-aminoacyl-tRNA deacylase (297 aa).

It belongs to the DtdA deacylase family. In terms of assembly, monomer. It depends on Zn(2+) as a cofactor.

The catalysed reaction is a D-aminoacyl-tRNA + H2O = a tRNA + a D-alpha-amino acid + H(+). The enzyme catalyses glycyl-tRNA(Ala) + H2O = tRNA(Ala) + glycine + H(+). Functionally, D-aminoacyl-tRNA deacylase with broad substrate specificity. By recycling D-aminoacyl-tRNA to D-amino acids and free tRNA molecules, this enzyme counteracts the toxicity associated with the formation of D-aminoacyl-tRNA entities in vivo. The sequence is that of D-aminoacyl-tRNA deacylase from Methanosarcina mazei (strain ATCC BAA-159 / DSM 3647 / Goe1 / Go1 / JCM 11833 / OCM 88) (Methanosarcina frisia).